The chain runs to 328 residues: D-cysteine desulfhydrase (328 aa).

Position 51 is an N6-(pyridoxal phosphate)lysine (Lys51).

The protein belongs to the ACC deaminase/D-cysteine desulfhydrase family. Homodimer. Pyridoxal 5'-phosphate is required as a cofactor.

It catalyses the reaction D-cysteine + H2O = hydrogen sulfide + pyruvate + NH4(+) + H(+). Catalyzes the alpha,beta-elimination reaction of D-cysteine and of several D-cysteine derivatives. It could be a defense mechanism against D-cysteine. This chain is D-cysteine desulfhydrase, found in Escherichia coli (strain UTI89 / UPEC).